The following is a 257-amino-acid chain: ATP synthase delta chain, chloroplastic (257 aa).

A chloroplast-targeting transit peptide spans methionine 1–methionine 70.

Belongs to the ATPase delta chain family. As to quaternary structure, F-type ATPases have 2 components, CF(1) - the catalytic core - and CF(0) - the membrane proton channel. CF(1) has five subunits: alpha(3), beta(3), gamma(1), delta(1), epsilon(1). CF(0) has three main subunits: a, b and c.

Its subcellular location is the plastid. It localises to the chloroplast thylakoid membrane. In terms of biological role, this protein seems to be part of the stalk that links CF(0) to CF(1). It either transmits conformational changes from CF(0) into CF(1) or is implicated in proton conduction. This is ATP synthase delta chain, chloroplastic (ATPD) from Spinacia oleracea (Spinach).